Consider the following 196-residue polypeptide: Putative NADH dehydrogenase/NAD(P)H nitroreductase PST_3601 (196 aa).

Belongs to the nitroreductase family. HadB/RutE subfamily. It depends on FMN as a cofactor.

The polypeptide is Putative NADH dehydrogenase/NAD(P)H nitroreductase PST_3601 (Stutzerimonas stutzeri (strain A1501) (Pseudomonas stutzeri)).